Here is a 596-residue protein sequence, read N- to C-terminus: MGKKSRVKTQKSGTGATATVSPKEILNLTSELLQKCSSPAPGPGKEWEEYTQIRALVEKIRKKQKGLSVTFDGKREDYFPDLMKWASENGASVEGFEMVNFKEEGFGLRATRDIKAEELFLWVPRKLLMTVESAKNSILGPLYSQDRILQAMGNIALAFHLLCERASPNSFWQPYIQTLPSEYDTPLYFEEEEVRCLQSTQAIHDVFSQYKNTARQYAYFYKVIQTHPHANKLPLKDSFTYEDYRWAVSSVMTRQNQIPTEDGSRVTLALIPLWDMCNHTNGLITTGYNLEDDRCECVALQDFQAGDQIYIFYGTRSNAEFVIHSGFFFDNNSHDRVKIKLGVSKSDRLYAMKAEVLARAGIPTSSVFALHFTEPPISAQLLAFLRVFCMTEEELKEHLLGDSAIDRIFTLGNSEFPVSWDNEVKLWTFLEDRASLLLKTYKTTIEEDKTVLKNPDLSVRATMAIKLRLGEKEILEKAVKSAAMNREYYRKHMEERAPLPRYEESDLGLLEGGVGDSRLPLVLRKLEEEAGVQESLSLTETVSKVKAAENGLVNGESLIPNGTRSENESLSPEESENTTGDTEESSGSMDAVKERL.

The disordered stretch occupies residues 1–22; that stretch reads MGKKSRVKTQKSGTGATATVSP. Over residues 10-20 the composition is skewed to polar residues; it reads QKSGTGATATV. Residues R75, 104 to 106, R254, 275 to 279, and 325 to 327 each bind S-adenosyl-L-methionine; these read EGF, DMCNH, and SGF. One can recognise an SET domain in the interval 94–314; the sequence is EGFEMVNFKE…AGDQIYIFYG (221 aa). Positions 551–596 are disordered; that stretch reads GLVNGESLIPNGTRSENESLSPEESENTTGDTEESSGSMDAVKERL. Acidic residues predominate over residues 571–584; sequence SPEESENTTGDTEE.

The protein belongs to the class V-like SAM-binding methyltransferase superfamily. SETD3 actin-histidine methyltransferase family. In terms of assembly, interacts with MYOD1. Post-translationally, phosphorylated by GSK3B, which is required for recognition by the SCF(FBXW7) complex and subsequent degradation. In terms of processing, ubiquitinated by the SCF(FBXW7) complex following phosphorylation by GSK3B, leading to its degradation by the proteasome.

It is found in the cytoplasm. Its subcellular location is the nucleus. It catalyses the reaction L-histidyl-[protein] + S-adenosyl-L-methionine = N(tele)-methyl-L-histidyl-[protein] + S-adenosyl-L-homocysteine + H(+). Protein-histidine N-methyltransferase that specifically mediates 3-methylhistidine (tele-methylhistidine) methylation of actin at 'His-73'. Histidine methylation of actin is required for smooth muscle contraction of the laboring uterus during delivery. Does not have protein-lysine N-methyltransferase activity and probably only catalyzes histidine methylation of actin. The sequence is that of Actin-histidine N-methyltransferase from Rattus norvegicus (Rat).